The primary structure comprises 190 residues: Large ribosomal subunit protein uL5 (190 aa).

Belongs to the universal ribosomal protein uL5 family. Part of the 50S ribosomal subunit; contacts the 5S rRNA and probably tRNA. Forms a bridge to the 30S subunit in the 70S ribosome.

This is one of the proteins that bind and probably mediate the attachment of the 5S RNA into the large ribosomal subunit, where it forms part of the central protuberance. In the 70S ribosome it contacts protein S13 of the 30S subunit (bridge B1b), connecting the 2 subunits; this bridge is implicated in subunit movement. May contact the P site tRNA; the 5S rRNA and some of its associated proteins might help stabilize positioning of ribosome-bound tRNAs. This is Large ribosomal subunit protein uL5 from Methanocaldococcus jannaschii (strain ATCC 43067 / DSM 2661 / JAL-1 / JCM 10045 / NBRC 100440) (Methanococcus jannaschii).